A 304-amino-acid polypeptide reads, in one-letter code: Glutaminase (304 aa).

Substrate-binding residues include S61, N113, E158, N165, Y189, Y240, and V258.

Belongs to the glutaminase family. Homotetramer.

It catalyses the reaction L-glutamine + H2O = L-glutamate + NH4(+). This is Glutaminase from Fusobacterium nucleatum subsp. nucleatum (strain ATCC 25586 / DSM 15643 / BCRC 10681 / CIP 101130 / JCM 8532 / KCTC 2640 / LMG 13131 / VPI 4355).